Consider the following 66-residue polypeptide: Small ribosomal subunit protein bS21A (66 aa).

The segment covering 34 to 46 (KHYEKPSVKKKRK) has biased composition (basic residues). The tract at residues 34–66 (KHYEKPSVKKKRKQMEAERKRRKAQRFRKPDRD) is disordered.

This sequence belongs to the bacterial ribosomal protein bS21 family.

The protein is Small ribosomal subunit protein bS21A of Geobacter sulfurreducens (strain ATCC 51573 / DSM 12127 / PCA).